The primary structure comprises 777 residues: Shutoff protein (777 aa).

2 disordered regions span residues 1-55 and 261-283; these read MEED…SVPV and PLDS…DDDL. Residues 9–20 show a composition bias toward polar residues; it reads QPDSETLTSPTS. A binding to host EIF4G region spans residues 250 to 314; the sequence is VMDHLLIKRV…VILVTVELEC (65 aa). Positions 317–435 constitute an RRM domain; sequence RFFANPQTLR…ELWTAFSERT (119 aa). Phosphotyrosine; by host occurs at positions 334 and 649. The interval 652–777 is disordered; the sequence is PQTGEELNTP…AAARLVESQP (126 aa). Over residues 656 to 665 the composition is skewed to polar residues; that stretch reads EELNTPSPSA. Gly residues predominate over residues 728–738; it reads GAGGQTPQGRG. Residues 753-763 are compositionally biased toward basic and acidic residues; the sequence is TRSEPASDGES.

It belongs to the adenoviridae shutoff protein family. In terms of assembly, monomer. Interacts with hexon protein; this interaction allows chaperoning and trimerization of hexon proteins. Interacts (via N-terminus) with host initiation factor EIF4G (via C-terminus). Interacts (via RRM domain) with viral mRNAs that contain the tripartite leader; this interaction allows ribosome shunting and expression of viral late mRNAs. Post-translationally, might be cleaved by the viral protease. Phosphorylated. Tyrosine phosphorylation enhances preferential binding to tripartite leader mRNAs and allows ribosome shunting. In terms of processing, methylated. Asymmetric dimethylation by host PRMT1 of the Arg/Gly-rich region may regulate shutoff protein binding to hexon and promote the capsid assembly in the nucleus.

The protein resides in the host cytoplasm. Protein that inhibits host translation while promoting late viral translation by ribosome shunting. Blocks host cap-dependent translation by binding to eIF4G, displacing MKNK1 from cap initiation complexes and preventing EIF4E phosphorylation. Binds to the tripartite leader sequence of viral late mRNAs and recruits host eIF4G, PABPC1/poly-A binding protein and 40S ribosomes subunits on viral mRNAs, allowing ribosome shunting and efficient translation of late viral mRNAs even though conventional translation via ribosome scanning from the cap has been shut off in the host cell. During assembly, acts as a chaperone protein that helps hexon proteins assembly into trimers. This is Shutoff protein from Homo sapiens (Human).